Here is a 354-residue protein sequence, read N- to C-terminus: UDP-3-O-acylglucosamine N-acyltransferase (354 aa).

Residue His-245 is the Proton acceptor of the active site.

The protein belongs to the transferase hexapeptide repeat family. LpxD subfamily. Homotrimer.

The enzyme catalyses a UDP-3-O-[(3R)-3-hydroxyacyl]-alpha-D-glucosamine + a (3R)-hydroxyacyl-[ACP] = a UDP-2-N,3-O-bis[(3R)-3-hydroxyacyl]-alpha-D-glucosamine + holo-[ACP] + H(+). It participates in bacterial outer membrane biogenesis; LPS lipid A biosynthesis. In terms of biological role, catalyzes the N-acylation of UDP-3-O-acylglucosamine using 3-hydroxyacyl-ACP as the acyl donor. Is involved in the biosynthesis of lipid A, a phosphorylated glycolipid that anchors the lipopolysaccharide to the outer membrane of the cell. The protein is UDP-3-O-acylglucosamine N-acyltransferase of Anaeromyxobacter dehalogenans (strain 2CP-C).